We begin with the raw amino-acid sequence, 49 residues long: Single-stranded DNA-binding protein (49 aa).

Homodimer in the absence of DNA, monomer when binding DNA.

Functionally, binds preferentially to single-stranded DNA and therefore, destabilizes double-stranded DNA. It is involved in DNA replication, repair and recombination. Binds ss-DNA as the replication fork advances and stimulates the replisome processivity and accuracy. The sequence is that of Single-stranded DNA-binding protein (32) from Enterobacteria phage RB9 (Bacteriophage RB9).